The following is a 34-amino-acid chain: Peptide 9797 (34 aa).

Expressed by the venom gland.

The protein resides in the secreted. This is Peptide 9797 from Tityus stigmurus (Brazilian scorpion).